The following is a 189-amino-acid chain: UPF0301 protein PFL_5830 (189 aa).

The protein belongs to the UPF0301 (AlgH) family.

This chain is UPF0301 protein PFL_5830, found in Pseudomonas fluorescens (strain ATCC BAA-477 / NRRL B-23932 / Pf-5).